The following is a 349-amino-acid chain: DNA replication and repair protein RecF (349 aa).

Residue 30–37 (GKNGSGKT) participates in ATP binding.

It belongs to the RecF family.

The protein resides in the cytoplasm. Functionally, the RecF protein is involved in DNA metabolism; it is required for DNA replication and normal SOS inducibility. RecF binds preferentially to single-stranded, linear DNA. It also seems to bind ATP. The chain is DNA replication and repair protein RecF from Francisella tularensis subsp. mediasiatica (strain FSC147).